The sequence spans 139 residues: Transcription initiation factor IIA small chain homolog (139 aa).

The disordered stretch occupies residues 113–139 (LSAQGPSKRVNRAHAAAAGDDEDDDSD).

The protein belongs to the TFIIA subunit 2 family.

Its subcellular location is the nucleus. This chain is Transcription initiation factor IIA small chain homolog, found in Caenorhabditis elegans.